Reading from the N-terminus, the 299-residue chain is Recombination-associated protein RdgC (299 aa).

This sequence belongs to the RdgC family.

Its subcellular location is the cytoplasm. It localises to the nucleoid. Its function is as follows. May be involved in recombination. This is Recombination-associated protein RdgC from Cupriavidus pinatubonensis (strain JMP 134 / LMG 1197) (Cupriavidus necator (strain JMP 134)).